Here is a 158-residue protein sequence, read N- to C-terminus: Small ribosomal subunit protein uS19 (158 aa).

This sequence belongs to the universal ribosomal protein uS19 family.

Functionally, protein S19 forms a complex with S13 that binds strongly to the 16S ribosomal RNA. The sequence is that of Small ribosomal subunit protein uS19 from Pyrobaculum aerophilum (strain ATCC 51768 / DSM 7523 / JCM 9630 / CIP 104966 / NBRC 100827 / IM2).